Reading from the N-terminus, the 1096-residue chain is Pullulanase (1096 aa).

An N-terminal signal peptide occupies residues 1 to 19 (MLRYTCHALFLGSLVLLSG). Cys-20 carries N-palmitoyl cysteine lipidation. The S-diacylglycerol cysteine moiety is linked to residue Cys-20. The segment covering 24–34 (SSSSTSGSPGS) has biased composition (low complexity). A disordered region spans residues 24–50 (SSSSTSGSPGSPGNPGNPGTPGTPDPQ). Asp-694 (nucleophile) is an active-site residue. Residue Glu-723 is the Proton donor of the active site. A disordered region spans residues 1014–1044 (QAGRQSGQPCRRHRGGDQRRAGKPDAAGLRR).

This sequence belongs to the glycosyl hydrolase 13 family. As to quaternary structure, homotrimer.

It localises to the cell membrane. It catalyses the reaction Hydrolysis of (1-&gt;6)-alpha-D-glucosidic linkages in pullulan, amylopectin and glycogen, and in the alpha- and beta-limit dextrins of amylopectin and glycogen.. In Klebsiella aerogenes (Enterobacter aerogenes), this protein is Pullulanase (pulA).